The sequence spans 343 residues: Probable dual-specificity RNA methyltransferase RlmN (343 aa).

Glutamate 91 serves as the catalytic Proton acceptor. The Radical SAM core domain maps to 97–327 (YKHGNSICVS…TTIRREMGSD (231 aa)). Cysteine 104 and cysteine 332 are oxidised to a cystine. Positions 111, 115, and 118 each coordinate [4Fe-4S] cluster. S-adenosyl-L-methionine contacts are provided by residues 158–159 (GE), serine 190, 213–215 (SLH), and asparagine 289. Cysteine 332 serves as the catalytic S-methylcysteine intermediate.

This sequence belongs to the radical SAM superfamily. RlmN family. [4Fe-4S] cluster is required as a cofactor.

Its subcellular location is the cytoplasm. It carries out the reaction adenosine(2503) in 23S rRNA + 2 reduced [2Fe-2S]-[ferredoxin] + 2 S-adenosyl-L-methionine = 2-methyladenosine(2503) in 23S rRNA + 5'-deoxyadenosine + L-methionine + 2 oxidized [2Fe-2S]-[ferredoxin] + S-adenosyl-L-homocysteine. The catalysed reaction is adenosine(37) in tRNA + 2 reduced [2Fe-2S]-[ferredoxin] + 2 S-adenosyl-L-methionine = 2-methyladenosine(37) in tRNA + 5'-deoxyadenosine + L-methionine + 2 oxidized [2Fe-2S]-[ferredoxin] + S-adenosyl-L-homocysteine. Functionally, specifically methylates position 2 of adenine 2503 in 23S rRNA and position 2 of adenine 37 in tRNAs. The polypeptide is Probable dual-specificity RNA methyltransferase RlmN (Clostridium novyi (strain NT)).